A 148-amino-acid polypeptide reads, in one-letter code: Lipoprotein MlpH (148 aa).

The first 17 residues, 1–17 (MKIINILFCLFLLMLNG), serve as a signal peptide directing secretion. Cysteine 18 carries the N-palmitoyl cysteine lipid modification. Cysteine 18 carries S-diacylglycerol cysteine lipidation. Residues 26-61 (LKNNAQQTKSRRKRDLTQKEVTQEKPKSKEELLREK) are disordered. Positions 40–61 (DLTQKEVTQEKPKSKEELLREK) are enriched in basic and acidic residues.

It belongs to the Multicopy lipoprotein (Mlp) family.

Its subcellular location is the cell outer membrane. Its function is as follows. An outer membrane protein that may participate in pathogenesis. Some human Lyme disease patients have antibodies against this protein. The Mlp proteins probably undergo intragenic recombination, generating new alleles. This Borreliella burgdorferi (strain ATCC 35210 / DSM 4680 / CIP 102532 / B31) (Borrelia burgdorferi) protein is Lipoprotein MlpH.